The sequence spans 793 residues: Protein smoothened (793 aa).

The first 32 residues, 1–32 (MAAGRPVRGPELAPRRLLQLLLLVLLGGPGRG), serve as a signal peptide directing secretion. Topologically, residues 33 to 237 (AALSGNVTGP…EAEHQDMHSY (205 aa)) are extracellular. Residues 35–61 (LSGNVTGPGPHSASGSSRRDVPVTSPP) form a disordered region. N-linked (GlcNAc...) asparagine glycosylation is present at Asn38. 5 disulfide bridges follow: Cys68–Cys182, Cys74–Cys138, Cys82–Cys131, Cys122–Cys158, and Cys151–Cys173. One can recognise an FZ domain in the interval 69 to 185 (GRAAHCEPLR…DHFPEGCPNE (117 aa)). Position 99 (Asp99) interacts with cholesterol. Asn192 is a glycosylation site (N-linked (GlcNAc...) asparagine). 3 disulfide bridges follow: Cys197–Cys217, Cys221–Cys299, and Cys318–Cys394. A helical transmembrane segment spans residues 238 to 258 (IAAFGAVTGLCTLFTLATFVA). Topologically, residues 259-265 (DWRNSNR) are cytoplasmic. A helical membrane pass occupies residues 266–286 (YPAVILFYVNACFFVGSIGWL). Over 287–318 (AQFMDGARREIVCRADGTMRFGEPTSSETLSC) the chain is Extracellular. A helical membrane pass occupies residues 319–339 (VIIFVIVYYALMAGVVWFVVL). The Cytoplasmic segment spans residues 340 to 362 (TYAWHTSFKALGTTYQPLSGKTS). A helical transmembrane segment spans residues 363–383 (YFHLLTWSLPFVLTVAILAVA). The Extracellular portion of the chain corresponds to 384–406 (QVDGDSVSGICFVGYKNYRYRAG). Tyr398 is a cholesterol binding site. A helical transmembrane segment spans residues 407-427 (FVLAPIGLVLIVGGYFLIRGV). Over 428 to 455 (MTLFSIKSNHPGLLSEKAASKINETMLR) the chain is Cytoplasmic. Residues 456 to 476 (LGIFGFLAFGFVLITFSCHFY) form a helical membrane-spanning segment. Over 477–528 (DFFNQAEWERSFRDYVLCQANVTIGLPTKKPIPDCEIKNRPSLLVEKINLFA) the chain is Extracellular. Cys494 and Cys511 are joined by a disulfide. Asn497 is a glycosylation site (N-linked (GlcNAc...) asparagine). Residues 529-549 (MFGTGIAMSTWVWTKATLLIW) traverse the membrane as a helical segment. The interaction with BBS5 and BBS7 stretch occupies residues 542–573 (TKATLLIWRRTWCRLTGHSDDEPKRIKKSKMI). Over 550–793 (RRTWCRLTGH…AEILDADSDF (244 aa)) the chain is Cytoplasmic. 3 positions are modified to phosphoserine: Ser560, Ser578, and Ser594. The interval 574–657 (AKAFSKRREL…TPVPPEEQAN (84 aa)) is required for interaction with PRKACA. Residues 585 to 597 (QNPGQELSFSMHT) form an interaction with DLG5 region. A Phosphothreonine modification is found at Thr597. Phosphoserine occurs at positions 599 and 642. 2 positions are modified to phosphothreonine: Thr644 and Thr648. Residue Ser666 is modified to Phosphoserine. Basic residues predominate over residues 674–684 (GRKKKRRKRKK). The segment at 674–703 (GRKKKRRKRKKEVCPLRPAPELHHSAPVPA) is disordered.

Belongs to the G-protein coupled receptor Fz/Smo family. In terms of assembly, homodimer. Interacts (via C-terminus) with protein kinase A catalytic subunit PRKACA; interacts with free PRKACA subunits and the interaction leads to sequestration of PRKACA at the membrane, preventing PRKACA-mediated phosphorylation of GLI transcription factors. Interacts with ARRB2. Interacts with BBS5 and BBS7; the interactions are indicative for the association of SMO with the BBsome complex to facilitate ciliary localization of SMO. Interacts with KIF7, DLG5 and SDCBP. Interacts with GAS8/DRC4. In terms of processing, phosphorylation by GRK kinases is required for interaction with protein kinase A catalytic subunit PRKACA. During early somite stages of embryonic development, modestly up-regulated in the cells of the node (at protein level).

It is found in the cell membrane. It localises to the cell projection. Its subcellular location is the cilium. In terms of biological role, g protein-coupled receptor which associates with the patched protein (PTCH) to transduce hedgehog protein signaling. Binding of sonic hedgehog (SHH) to its receptor patched prevents inhibition of smoothened (SMO) by patched. When active, SMO binds to and sequesters protein kinase A catalytic subunit PRKACA at the cell membrane, preventing PRKACA-mediated phosphorylation of GLI transcription factors which releases the GLI proteins from PRKACA-mediated inhibition and allows for transcriptional activation of hedgehog pathway target genes. Required for the accumulation of KIF7, GLI2 and GLI3 in the cilia. Interacts with DLG5 at the ciliary base to induce the accumulation of KIF7 and GLI2 at the ciliary tip for GLI2 activation. The protein is Protein smoothened (Smo) of Mus musculus (Mouse).